The chain runs to 445 residues: tRNA(Ile)-lysidine synthase (445 aa).

An ATP-binding site is contributed by Ser33–Ser38.

This sequence belongs to the tRNA(Ile)-lysidine synthase family.

It is found in the cytoplasm. The catalysed reaction is cytidine(34) in tRNA(Ile2) + L-lysine + ATP = lysidine(34) in tRNA(Ile2) + AMP + diphosphate + H(+). In terms of biological role, ligates lysine onto the cytidine present at position 34 of the AUA codon-specific tRNA(Ile) that contains the anticodon CAU, in an ATP-dependent manner. Cytidine is converted to lysidine, thus changing the amino acid specificity of the tRNA from methionine to isoleucine. This is tRNA(Ile)-lysidine synthase from Pseudomonas syringae pv. tomato (strain ATCC BAA-871 / DC3000).